The chain runs to 157 residues: MIILGIDPALGSLGWAVVAKENAQLKYLASGIIRTNSKDAIHHRLAFINSTLEKVILEYQPNMAAIEETFVNTNSVTSLKLGYARGAIMSLIGRYNLDMREFKPNTVKKTVTGYGHAEKDQMLHMIKLLLSGTALITNSDEADAVAIAYTCLVTKNY.

Residues Asp-7, Glu-67, and Asp-140 contribute to the active site. Mg(2+) contacts are provided by Asp-7, Glu-67, and Asp-140.

Belongs to the RuvC family. As to quaternary structure, homodimer which binds Holliday junction (HJ) DNA. The HJ becomes 2-fold symmetrical on binding to RuvC with unstacked arms; it has a different conformation from HJ DNA in complex with RuvA. In the full resolvosome a probable DNA-RuvA(4)-RuvB(12)-RuvC(2) complex forms which resolves the HJ. Requires Mg(2+) as cofactor.

It is found in the cytoplasm. It catalyses the reaction Endonucleolytic cleavage at a junction such as a reciprocal single-stranded crossover between two homologous DNA duplexes (Holliday junction).. The RuvA-RuvB-RuvC complex processes Holliday junction (HJ) DNA during genetic recombination and DNA repair. Endonuclease that resolves HJ intermediates. Cleaves cruciform DNA by making single-stranded nicks across the HJ at symmetrical positions within the homologous arms, yielding a 5'-phosphate and a 3'-hydroxyl group; requires a central core of homology in the junction. The consensus cleavage sequence is 5'-(A/T)TT(C/G)-3'. Cleavage occurs on the 3'-side of the TT dinucleotide at the point of strand exchange. HJ branch migration catalyzed by RuvA-RuvB allows RuvC to scan DNA until it finds its consensus sequence, where it cleaves and resolves the cruciform DNA. This Rickettsia africae (strain ESF-5) protein is Crossover junction endodeoxyribonuclease RuvC.